The primary structure comprises 131 residues: Large ribosomal subunit protein bL12 (131 aa).

Positions 99–125 (ESTPKPIKEGTNKDDAEETKKKLEEAG) are enriched in basic and acidic residues. The segment at 99 to 131 (ESTPKPIKEGTNKDDAEETKKKLEEAGAKVTVK) is disordered.

It belongs to the bacterial ribosomal protein bL12 family. Homodimer. Part of the ribosomal stalk of the 50S ribosomal subunit. Forms a multimeric L10(L12)X complex, where L10 forms an elongated spine to which 2 to 4 L12 dimers bind in a sequential fashion. Binds GTP-bound translation factors.

Its function is as follows. Forms part of the ribosomal stalk which helps the ribosome interact with GTP-bound translation factors. Is thus essential for accurate translation. This is Large ribosomal subunit protein bL12 from Gloeothece citriformis (strain PCC 7424) (Cyanothece sp. (strain PCC 7424)).